A 332-amino-acid chain; its full sequence is Biotin synthase (332 aa).

Residues 47–273 (YYGNKVKLNM…MNPTKEIRIA (227 aa)) form the Radical SAM core domain. [4Fe-4S] cluster-binding residues include Cys65, Cys69, and Cys72. Residues Cys109, Cys141, Cys201, and Arg271 each contribute to the [2Fe-2S] cluster site.

The protein belongs to the radical SAM superfamily. Biotin synthase family. In terms of assembly, homodimer. [4Fe-4S] cluster serves as cofactor. The cofactor is [2Fe-2S] cluster.

The catalysed reaction is (4R,5S)-dethiobiotin + (sulfur carrier)-SH + 2 reduced [2Fe-2S]-[ferredoxin] + 2 S-adenosyl-L-methionine = (sulfur carrier)-H + biotin + 2 5'-deoxyadenosine + 2 L-methionine + 2 oxidized [2Fe-2S]-[ferredoxin]. It functions in the pathway cofactor biosynthesis; biotin biosynthesis; biotin from 7,8-diaminononanoate: step 2/2. Functionally, catalyzes the conversion of dethiobiotin (DTB) to biotin by the insertion of a sulfur atom into dethiobiotin via a radical-based mechanism. The protein is Biotin synthase of Geobacillus thermodenitrificans (strain NG80-2).